A 316-amino-acid polypeptide reads, in one-letter code: Geminin coiled-coil domain-containing protein 1 (316 aa).

The stretch at Q82–A117 forms a coiled coil. 2 stretches are compositionally biased toward polar residues: residues G134–G155 and M207–T234. Disordered stretches follow at residues G134–R160 and M207–P269. A Phosphothreonine; by cdk2 modification is found at T153. Over residues S235 to E252 the composition is skewed to low complexity. Residues T253–Y262 show a composition bias toward polar residues.

Belongs to the GEMC1 family. Interacts with topbp1. Interacts with Cdc45l and the kinase cdk2-cyclin-E (the interaction is direct). Highly phosphorylated by cdk2; stimulates initiation of DNA replication. In terms of tissue distribution, expressed in most tissues. Enriched in proliferating cells from skin and gut.

Its subcellular location is the nucleus. Functionally, regulator of DNA replication. Promotes initiation of chromosomal DNA replication by mediating topbp1- and cdk2-dependent recruitment of cdc45l onto replication origins. This is Geminin coiled-coil domain-containing protein 1 (gmnc) from Xenopus laevis (African clawed frog).